We begin with the raw amino-acid sequence, 156 residues long: Probable chemoreceptor glutamine deamidase CheD (156 aa).

The protein belongs to the CheD family.

The enzyme catalyses L-glutaminyl-[protein] + H2O = L-glutamyl-[protein] + NH4(+). Probably deamidates glutamine residues to glutamate on methyl-accepting chemotaxis receptors (MCPs), playing an important role in chemotaxis. The protein is Probable chemoreceptor glutamine deamidase CheD of Sulfurimonas denitrificans (strain ATCC 33889 / DSM 1251) (Thiomicrospira denitrificans (strain ATCC 33889 / DSM 1251)).